A 210-amino-acid chain; its full sequence is Uracil phosphoribosyltransferase (210 aa).

Residues arginine 80, arginine 105, and 132–140 contribute to the 5-phospho-alpha-D-ribose 1-diphosphate site; that span reads DPMLATGGS. Residues isoleucine 195 and 200 to 202 contribute to the uracil site; that span reads GDA. Aspartate 201 serves as a coordination point for 5-phospho-alpha-D-ribose 1-diphosphate.

It belongs to the UPRTase family. It depends on Mg(2+) as a cofactor.

It catalyses the reaction UMP + diphosphate = 5-phospho-alpha-D-ribose 1-diphosphate + uracil. The protein operates within pyrimidine metabolism; UMP biosynthesis via salvage pathway; UMP from uracil: step 1/1. Allosterically activated by GTP. Its function is as follows. Catalyzes the conversion of uracil and 5-phospho-alpha-D-ribose 1-diphosphate (PRPP) to UMP and diphosphate. This is Uracil phosphoribosyltransferase from Thermoanaerobacter pseudethanolicus (strain ATCC 33223 / 39E) (Clostridium thermohydrosulfuricum).